We begin with the raw amino-acid sequence, 251 residues long: Probable transcriptional regulatory protein Blon_1155/BLIJ_1182 (251 aa).

This sequence belongs to the TACO1 family.

The protein resides in the cytoplasm. The chain is Probable transcriptional regulatory protein Blon_1155/BLIJ_1182 from Bifidobacterium longum subsp. infantis (strain ATCC 15697 / DSM 20088 / JCM 1222 / NCTC 11817 / S12).